The following is a 191-amino-acid chain: NADH-quinone oxidoreductase subunit B (191 aa).

[4Fe-4S] cluster is bound by residues Cys70, Cys71, Cys135, and Cys165.

It belongs to the complex I 20 kDa subunit family. In terms of assembly, NDH-1 is composed of 14 different subunits. Subunits NuoB, C, D, E, F, and G constitute the peripheral sector of the complex. [4Fe-4S] cluster is required as a cofactor.

The protein localises to the cell inner membrane. It catalyses the reaction a quinone + NADH + 5 H(+)(in) = a quinol + NAD(+) + 4 H(+)(out). In terms of biological role, NDH-1 shuttles electrons from NADH, via FMN and iron-sulfur (Fe-S) centers, to quinones in the respiratory chain. The immediate electron acceptor for the enzyme in this species is believed to be ubiquinone. Couples the redox reaction to proton translocation (for every two electrons transferred, four hydrogen ions are translocated across the cytoplasmic membrane), and thus conserves the redox energy in a proton gradient. The sequence is that of NADH-quinone oxidoreductase subunit B from Parvibaculum lavamentivorans (strain DS-1 / DSM 13023 / NCIMB 13966).